A 484-amino-acid chain; its full sequence is Legumin type B (484 aa).

Residues 1 to 22 (MSKPFLSLLSLSLLLFTSTCLA) form the signal peptide. Intrachain disulfides connect C33/C66 and C109/C310. One can recognise a Cupin type-1 1 domain in the interval 38-257 (INALEPDHRV…TFNTEEDTAK (220 aa)). 3 disordered regions span residues 109–141 (CPQTYQEPRSSQSRQGSRQQQPDSHQKIRRFRK), 196–236 (PETQ…GNSV), and 275–304 (GLRIINPEGQQEEEEEEEEEKQRSEQGRNG). Residues 117–129 (RSSQSRQGSRQQQ) show a composition bias toward low complexity. Positions 284–293 (QQEEEEEEEE) are enriched in acidic residues. Residues 316–463 (ENIAQPARAD…AFGLRQRQVT (148 aa)) enclose the Cupin type-1 2 domain.

This sequence belongs to the 11S seed storage protein (globulins) family. As to quaternary structure, hexamer; each subunit is composed of an acidic and a basic chain derived from a single precursor and linked by a disulfide bond.

In terms of biological role, this protein found in the seeds of many leguminous and non-leguminous plants is the source of sulfur-containing amino acids in seed meals. In Vicia faba (Broad bean), this protein is Legumin type B (LEB4).